We begin with the raw amino-acid sequence, 192 residues long: MQTGNLWQVLGLCLLLVGAWAQDDTEQNPYEVSISGNSVELTCPKDFENGIQWKRNNEQMKGHNEKYLLLDQFSEMESSGYYQCLATEGNTEAAHTLYLKARVCKNCMEVNLLEVATIIVVDICVTLGLLLLVYYWSKSRKAKATPMTRGAGAGGRPRGQNRERPPPVPNPDYEPIRKGQRDLYSGLNQRGV.

The signal sequence occupies residues 1 to 21 (MQTGNLWQVLGLCLLLVGAWA). Residues 22–111 (QDDTEQNPYE…RVCKNCMEVN (90 aa)) are Extracellular-facing. The region spanning 27–98 (QNPYEVSISG…GNTEAAHTLY (72 aa)) is the Ig-like domain. Cys43 and Cys84 are disulfide-bonded. A helical membrane pass occupies residues 112-137 (LLEVATIIVVDICVTLGLLLLVYYWS). At 138–192 (KSRKAKATPMTRGAGAGGRPRGQNRERPPPVPNPDYEPIRKGQRDLYSGLNQRGV) the chain is on the cytoplasmic side. The segment at 146–192 (PMTRGAGAGGRPRGQNRERPPPVPNPDYEPIRKGQRDLYSGLNQRGV) is disordered. The interval 160 to 177 (QNRERPPPVPNPDYEPIR) is NUMB-binding region. The ITAM domain occupies 163 to 190 (ERPPPVPNPDYEPIRKGQRDLYSGLNQR). The segment at 164-171 (RPPPVPNP) is proline-rich sequence. Residues Tyr173 and Tyr184 each carry the phosphotyrosine modification.

As to quaternary structure, the TCR-CD3 complex is composed of a CD3D/CD3E and a CD3G/CD3E heterodimers that preferentially associate with TCRalpha and TCRbeta, respectively, to form TCRalpha/CD3E/CD3G and TCRbeta/CD3G/CD3E trimers. In turn, the hexamer interacts with CD3Z homodimer to form the TCR-CD3 complex. Alternatively, TCRalpha and TCRbeta can be replaced by TCRgamma and TCRdelta. Interacts with CD6. Interacts (via Proline-rich sequence) with NCK1; the interaction is ligand dependent but independent of tyrosine kinase activation. In terms of processing, phosphorylated on Tyr residues after T-cell receptor triggering by LCK in association with CD4/CD8.

The protein resides in the cell membrane. Its function is as follows. Part of the TCR-CD3 complex present on T-lymphocyte cell surface that plays an essential role in adaptive immune response. When antigen presenting cells (APCs) activate T-cell receptor (TCR), TCR-mediated signals are transmitted across the cell membrane by the CD3 chains CD3D, CD3E, CD3G and CD3Z. All CD3 chains contain immunoreceptor tyrosine-based activation motifs (ITAMs) in their cytoplasmic domain. Upon TCR engagement, these motifs become phosphorylated by Src family protein tyrosine kinases LCK and FYN, resulting in the activation of downstream signaling pathways. In addition of this role of signal transduction in T-cell activation, CD3E plays an essential role in correct T-cell development. Also participates in internalization and cell surface down-regulation of TCR-CD3 complexes via endocytosis sequences present in CD3E cytosolic region. In addition to its role as a TCR coreceptor, it serves as a receptor for ITPRIPL1. Ligand recognition inhibits T-cell activation by promoting interaction with NCK1, which prevents CD3E-ZAP70 interaction and blocks the ERK-NFkB signaling cascade and calcium influx. The sequence is that of T-cell surface glycoprotein CD3 epsilon chain (CD3E) from Ovis aries (Sheep).